The chain runs to 717 residues: Methylcrotonoyl-CoA carboxylase subunit alpha, mitochondrial (717 aa).

The N-terminal 38 residues, 1 to 38 (MAAAALLAAVDRNQLRRVPILLLQPREWAWKLRTMKYG), are a transit peptide targeting the mitochondrion. One can recognise a Biotin carboxylation domain in the interval 45-490 (ITKVLIANRG…HTDFIPQHHK (446 aa)). Residue lysine 159 coordinates ATP. The ATP-grasp domain maps to 163–360 (KSIMAAAGVP…LVEWQLRIAA (198 aa)). N6-acetyllysine occurs at positions 180 and 193. ATP-binding positions include lysine 201 and 207–208 (GG). Lysine 233 carries the N6-acetyllysine modification. ATP-binding residues include histidine 251, histidine 278, and glutamate 318. The active site involves arginine 335. At lysine 490 the chain carries N6-acetyllysine. Lysine 577 bears the N6-acetyllysine; alternate mark. N6-succinyllysine; alternate is present on lysine 577. The 90-residue stretch at 622-711 (SIEVGIPVPK…NRHAPLVEFE (90 aa)) folds into the Biotinyl-binding domain. At lysine 677 the chain carries N6-biotinyllysine.

In terms of assembly, probably a dodecamer composed of six biotin-containing alpha subunits (MCCC1) and six beta (MCCC2) subunits. Interacts (via the biotin carboxylation domain) with SIRT4. It depends on biotin as a cofactor. In terms of processing, acetylated.

It is found in the mitochondrion matrix. It catalyses the reaction 3-methylbut-2-enoyl-CoA + hydrogencarbonate + ATP = 3-methyl-(2E)-glutaconyl-CoA + ADP + phosphate + H(+). Its pathway is amino-acid degradation; L-leucine degradation; (S)-3-hydroxy-3-methylglutaryl-CoA from 3-isovaleryl-CoA: step 2/3. Functionally, biotin-attachment subunit of the 3-methylcrotonyl-CoA carboxylase, an enzyme that catalyzes the conversion of 3-methylcrotonyl-CoA to 3-methylglutaconyl-CoA, a critical step for leucine and isovaleric acid catabolism. The polypeptide is Methylcrotonoyl-CoA carboxylase subunit alpha, mitochondrial (Mccc1) (Mus musculus (Mouse)).